Consider the following 575-residue polypeptide: Malto-oligosyltrehalose trehalohydrolase (575 aa).

248 to 253 (RLDAVH) serves as a coordination point for substrate. The active-site Nucleophile is Asp-250. Glu-287 functions as the Proton donor in the catalytic mechanism. Substrate contacts are provided by residues 312–316 (DDVHH) and 381–386 (HDQVGN).

It belongs to the glycosyl hydrolase 13 family.

It is found in the cytoplasm. The catalysed reaction is hydrolysis of (1-&gt;4)-alpha-D-glucosidic linkage in 4-alpha-D-[(1-&gt;4)-alpha-D-glucanosyl]n trehalose to yield trehalose and (1-&gt;4)-alpha-D-glucan.. The protein operates within glycan biosynthesis; trehalose biosynthesis. The polypeptide is Malto-oligosyltrehalose trehalohydrolase (treZ) (Arthrobacter ramosus).